We begin with the raw amino-acid sequence, 476 residues long: Cytosolic iron-sulfur assembly component 3 (476 aa).

At alanine 2 the chain carries N-acetylalanine. [4Fe-4S] cluster is bound by residues cysteine 24, cysteine 71, cysteine 74, cysteine 77, cysteine 190, cysteine 246, cysteine 395, and cysteine 399.

It belongs to the NARF family. As to quaternary structure, external component of the CIA complex. In the CIA complex, interacts directly with CIAO1 and MMS19.

Component of the cytosolic iron-sulfur protein assembly (CIA) complex, a multiprotein complex that mediates the incorporation of iron-sulfur cluster into extramitochondrial Fe/S proteins. Seems to negatively regulate the level of HIF1A expression, although this effect could be indirect. In Rattus norvegicus (Rat), this protein is Cytosolic iron-sulfur assembly component 3.